The sequence spans 494 residues: UDP-N-acetylmuramate--L-alanine ligase (494 aa).

Residue 140–146 (GTHGKTT) participates in ATP binding.

The protein belongs to the MurCDEF family.

It localises to the cytoplasm. The catalysed reaction is UDP-N-acetyl-alpha-D-muramate + L-alanine + ATP = UDP-N-acetyl-alpha-D-muramoyl-L-alanine + ADP + phosphate + H(+). The protein operates within cell wall biogenesis; peptidoglycan biosynthesis. Cell wall formation. This chain is UDP-N-acetylmuramate--L-alanine ligase, found in Trichormus variabilis (strain ATCC 29413 / PCC 7937) (Anabaena variabilis).